A 518-amino-acid chain; its full sequence is Glutamate--cysteine ligase (518 aa).

It belongs to the glutamate--cysteine ligase type 1 family. Type 1 subfamily.

The enzyme catalyses L-cysteine + L-glutamate + ATP = gamma-L-glutamyl-L-cysteine + ADP + phosphate + H(+). It participates in sulfur metabolism; glutathione biosynthesis; glutathione from L-cysteine and L-glutamate: step 1/2. The sequence is that of Glutamate--cysteine ligase from Klebsiella pneumoniae (strain 342).